Reading from the N-terminus, the 225-residue chain is Futalosine hydrolase (225 aa).

This sequence belongs to the PNP/UDP phosphorylase family. Futalosine hydrolase subfamily. As to quaternary structure, homotetramer.

The enzyme catalyses futalosine + H2O = dehypoxanthine futalosine + hypoxanthine. The protein operates within quinol/quinone metabolism; menaquinone biosynthesis. With respect to regulation, no enhancing of inhibitory effects are observed with divalent metal ions. Slightly inhibited by hypoxanthine. Its function is as follows. Catalyzes the hydrolysis of futalosine (FL) to dehypoxanthine futalosine (DHFL) and hypoxanthine, a step in the biosynthesis of menaquinone (MK, vitamin K2). Is highly specific to futalosine since it does not accept aminodeoxyfutalosine (AFL), or any structurally related nucleotides and nucleosides as substrate. The chain is Futalosine hydrolase from Thermus thermophilus (strain ATCC 27634 / DSM 579 / HB8).